Reading from the N-terminus, the 195-residue chain is ATP-dependent Clp protease proteolytic subunit (195 aa).

Serine 98 functions as the Nucleophile in the catalytic mechanism. The active site involves histidine 123.

It belongs to the peptidase S14 family. In terms of assembly, fourteen ClpP subunits assemble into 2 heptameric rings which stack back to back to give a disk-like structure with a central cavity, resembling the structure of eukaryotic proteasomes.

It localises to the cytoplasm. The catalysed reaction is Hydrolysis of proteins to small peptides in the presence of ATP and magnesium. alpha-casein is the usual test substrate. In the absence of ATP, only oligopeptides shorter than five residues are hydrolyzed (such as succinyl-Leu-Tyr-|-NHMec, and Leu-Tyr-Leu-|-Tyr-Trp, in which cleavage of the -Tyr-|-Leu- and -Tyr-|-Trp bonds also occurs).. Functionally, cleaves peptides in various proteins in a process that requires ATP hydrolysis. Has a chymotrypsin-like activity. Plays a major role in the degradation of misfolded proteins. This chain is ATP-dependent Clp protease proteolytic subunit, found in Sulfurovum sp. (strain NBC37-1).